Reading from the N-terminus, the 427-residue chain is Glutamate-1-semialdehyde 2,1-aminomutase (427 aa).

At K268 the chain carries N6-(pyridoxal phosphate)lysine.

The protein belongs to the class-III pyridoxal-phosphate-dependent aminotransferase family. HemL subfamily. Pyridoxal 5'-phosphate is required as a cofactor.

The protein localises to the cytoplasm. The catalysed reaction is (S)-4-amino-5-oxopentanoate = 5-aminolevulinate. It functions in the pathway porphyrin-containing compound metabolism; protoporphyrin-IX biosynthesis; 5-aminolevulinate from L-glutamyl-tRNA(Glu): step 2/2. The polypeptide is Glutamate-1-semialdehyde 2,1-aminomutase (Methanococcus maripaludis (strain C5 / ATCC BAA-1333)).